We begin with the raw amino-acid sequence, 212 residues long: Thiamine-phosphate synthase (212 aa).

4-amino-2-methyl-5-(diphosphooxymethyl)pyrimidine-binding positions include 35–39 (QLRRK) and Asn-67. Positions 68 and 87 each coordinate Mg(2+). Ser-106 is a binding site for 4-amino-2-methyl-5-(diphosphooxymethyl)pyrimidine. Position 132-134 (132-134 (TGS)) interacts with 2-[(2R,5Z)-2-carboxy-4-methylthiazol-5(2H)-ylidene]ethyl phosphate. Lys-135 is a binding site for 4-amino-2-methyl-5-(diphosphooxymethyl)pyrimidine. 2-[(2R,5Z)-2-carboxy-4-methylthiazol-5(2H)-ylidene]ethyl phosphate contacts are provided by residues Gly-163 and 183 to 184 (IS).

Belongs to the thiamine-phosphate synthase family. Mg(2+) serves as cofactor.

It carries out the reaction 2-[(2R,5Z)-2-carboxy-4-methylthiazol-5(2H)-ylidene]ethyl phosphate + 4-amino-2-methyl-5-(diphosphooxymethyl)pyrimidine + 2 H(+) = thiamine phosphate + CO2 + diphosphate. The catalysed reaction is 2-(2-carboxy-4-methylthiazol-5-yl)ethyl phosphate + 4-amino-2-methyl-5-(diphosphooxymethyl)pyrimidine + 2 H(+) = thiamine phosphate + CO2 + diphosphate. It catalyses the reaction 4-methyl-5-(2-phosphooxyethyl)-thiazole + 4-amino-2-methyl-5-(diphosphooxymethyl)pyrimidine + H(+) = thiamine phosphate + diphosphate. The protein operates within cofactor biosynthesis; thiamine diphosphate biosynthesis; thiamine phosphate from 4-amino-2-methyl-5-diphosphomethylpyrimidine and 4-methyl-5-(2-phosphoethyl)-thiazole: step 1/1. In terms of biological role, condenses 4-methyl-5-(beta-hydroxyethyl)thiazole monophosphate (THZ-P) and 2-methyl-4-amino-5-hydroxymethyl pyrimidine pyrophosphate (HMP-PP) to form thiamine monophosphate (TMP). The polypeptide is Thiamine-phosphate synthase (Chlorobium luteolum (strain DSM 273 / BCRC 81028 / 2530) (Pelodictyon luteolum)).